Consider the following 405-residue polypeptide: Venom serine protease 34 (405 aa).

An N-terminal signal peptide occupies residues Met1 to Thr35. 2 disulfide bridges follow: Cys42–Cys70 and Cys95–Cys111. The CUB domain occupies Cys42–Asp147. Residue Asn113 is glycosylated (N-linked (GlcNAc...) asparagine). One can recognise a Peptidase S1 domain in the interval Ile161–Pro397. Cys188 and Cys204 are oxidised to a cystine. The active-site Charge relay system is His203. N-linked (GlcNAc...) asparagine glycosylation is found at Asn209 and Asn229. Asp257 serves as the catalytic Charge relay system. 2 cysteine pairs are disulfide-bonded: Cys323/Cys336 and Cys345/Cys375. The Charge relay system role is filled by Ser349.

It belongs to the peptidase S1 family. As to expression, expressed by the venom duct.

The protein localises to the secreted. This Apis mellifera (Honeybee) protein is Venom serine protease 34.